A 237-amino-acid polypeptide reads, in one-letter code: Oligoribonuclease, mitochondrial (237 aa).

The transit peptide at 1 to 25 (MLGGSLGSRLLRGVGGSHGRFGARG) directs the protein to the mitochondrion. The Exonuclease domain maps to 43-207 (MVWVDLEMTG…DDISESIKEL (165 aa)). Mg(2+)-binding residues include D47 and E49. The residue at position 92 (S92) is a Phosphoserine. The residue at position 122 (Y122) is a Phosphotyrosine. D147 lines the Mg(2+) pocket. An N6-acetyllysine modification is found at K173. H194 is an active-site residue. Residue D199 participates in Mg(2+) binding.

Belongs to the oligoribonuclease family. As to quaternary structure, homodimer. Homotetramer. It depends on Mn(2+) as a cofactor. Requires Mg(2+) as cofactor. As to expression, highly expressed in the heart and at lower levels in the lymph nodes, brain, lung, liver, spleen and thymus.

The protein localises to the mitochondrion intermembrane space. It localises to the mitochondrion matrix. It is found in the mitochondrion. The protein resides in the cytoplasm. Its subcellular location is the nucleus. Inhibited by adenosine 3',5'-bisphosphate. In terms of biological role, 3'-to-5'exoribonuclease that preferentially degrades DNA and RNA oligonucleotides composed of only two nucleotides. Binds and degrades longer oligonucleotides with a lower affinity. Plays dual roles in mitochondria, scavenging nanoRNAs (small RNA oligonucleotides of &lt;5 nucleotides) that are produced by the degradosome and clearing short RNAs that are generated by RNA processing. Essential for correct initiation of mitochondrial transcription, degrading mitochondrial RNA dinucleotides to prevent RNA-primed transcription at non-canonical sites in the mitochondrial genome. Essential for embryonic development. Functionally, 3'-to-5'exoribonuclease that preferentially degrades DNA and RNA oligonucleotides composed of only two nucleotides. In Homo sapiens (Human), this protein is Oligoribonuclease, mitochondrial (REXO2).